A 541-amino-acid polypeptide reads, in one-letter code: MAAKDVKFGNDARVKMLRGVNVLADAVKVTLGPKGRNVVLDKSFGAPTITKDGVSVAREIELEDKFENMGAQMVKEVASKANDAAGDGTTTATVLAQSIITEGLKAVAAGMNPMDLKRGIDQAVIAAVEELKKLSVPCSDSKAIAQVGTISANSDETVGTLIAQAMEKVGKEGVITVEEGTGLQDELDVVEGMQFDRGYLSPYFINKPETGAVELETPFILLADKKISNIREMLPVLEAVAKAGKPLLIIAEDVEGEALATLVVNTMRGIVKVAAVKAPGFGDRRKAMLQDIAILTGGTVISEEIGMELEKAALEDLGQAKRVVINKDTTTIIDGVGEETTIQGRVTQIRQQIEEATSDYDKEKLQERVAKLAGGVAVLKVGAATEVEMKEKKARVEDALHATRAAVEEGVVAGGGVALVRVAAQLTELRGQNEDQNVGIKVALRAMESPLRQIVSNAGEEPSVVANNVKAGDGNYGYNAQTEEYGNMIDFGILDPTKVTRSALQYAASVAGLMITTECMVTDLPKGDAPDLGAGAGGMGG.

Residues 30-33 (TLGP), Lys-51, 87-91 (DGTTT), Gly-415, and Asp-495 each bind ATP.

This sequence belongs to the chaperonin (HSP60) family. As to quaternary structure, forms a cylinder of 14 subunits composed of two heptameric rings stacked back-to-back. Interacts with the co-chaperonin GroES.

The protein resides in the cytoplasm. The catalysed reaction is ATP + H2O + a folded polypeptide = ADP + phosphate + an unfolded polypeptide.. Together with its co-chaperonin GroES, plays an essential role in assisting protein folding. The GroEL-GroES system forms a nano-cage that allows encapsulation of the non-native substrate proteins and provides a physical environment optimized to promote and accelerate protein folding. The chain is Chaperonin GroEL from Pantoea ananas (Erwinia uredovora).